The sequence spans 463 residues: Chaperone SurA (463 aa).

The N-terminal stretch at 1–25 (MTKPFSVVLASLLAITSTISPLASA) is a signal peptide. PpiC domains lie at 174 to 276 (GSKY…KLME) and 289 to 388 (VTEY…QRVG). 2 disordered regions span residues 329–348 (ATAK…GDLG) and 434–463 (GDRA…KPTR). Residues 439–452 (NNATAAPAKSADPA) show a composition bias toward low complexity. Positions 453–463 (LPAPPPAKPTR) are enriched in pro residues.

It localises to the periplasm. The catalysed reaction is [protein]-peptidylproline (omega=180) = [protein]-peptidylproline (omega=0). Its function is as follows. Chaperone involved in the correct folding and assembly of outer membrane proteins. Recognizes specific patterns of aromatic residues and the orientation of their side chains, which are found more frequently in integral outer membrane proteins. May act in both early periplasmic and late outer membrane-associated steps of protein maturation. The polypeptide is Chaperone SurA (Xanthomonas oryzae pv. oryzae (strain MAFF 311018)).